Reading from the N-terminus, the 250-residue chain is Ribosomal RNA small subunit methyltransferase J (250 aa).

S-adenosyl-L-methionine is bound by residues 96 to 97 (RD) and D168.

Belongs to the methyltransferase superfamily. RsmJ family.

It localises to the cytoplasm. The catalysed reaction is guanosine(1516) in 16S rRNA + S-adenosyl-L-methionine = N(2)-methylguanosine(1516) in 16S rRNA + S-adenosyl-L-homocysteine + H(+). Its function is as follows. Specifically methylates the guanosine in position 1516 of 16S rRNA. The protein is Ribosomal RNA small subunit methyltransferase J of Neisseria gonorrhoeae (strain ATCC 700825 / FA 1090).